Reading from the N-terminus, the 182-residue chain is Dipetalodipin (182 aa).

The N-terminal stretch at 1-18 (MKTIIAAIFLGILMHAFA) is a signal peptide. Cystine bridges form between Cys-21-Cys-134, Cys-55-Cys-181, and Cys-87-Cys-103.

It belongs to the calycin superfamily. Triabin family. In terms of tissue distribution, expressed in salivary glands.

It localises to the secreted. Functionally, inhibits platelet aggregation, vasoconstriction, and angiogenesis through binding to distinct eicosanoids involved in inflammation (acts as a scavenger), and has a role in inhibiting host innate immunity by impairing platelet-assisted formation of neutrophil extracellular traps (NETs). Inhibits platelet aggregation by collagen (IC(50)=30 nM), thromboxane A2 mimetic (TXA2 mimetic), or arachidonic acid (AA) without affecting aggregation induced by ADP, convulxin (GP6 agonist), PMA, and ristocetin (vWF-dependent platelet agglutinator). Binds with high affinity to TXA2, TXB2, prostaglandine H2 mimetic (PGH2 mimetic), PGD2, PGJ2, and PGF2alpha. Also interacts with 15(S)-hydroxyeicosatetraenoic acid (HETE), being the first calycin/lipocalin described to date to bind to a derivative of 15-lipoxygenase. Binding is not observed to other prostaglandins, leukotrienes, HETEs, lipids, and biogenic amines. It prevents contraction of rat uterus stimulated by PGF2alpha and induces relaxation of aorta previously contracted with TXA2 mimetic. In addition, it inhibits angiogenesis mediated by 15(S)-HETE and does not enhance inhibition of collagen-induced platelet aggregation by SQ29548 (TXA2 antagonist) and indomethacin. Also impairs platelet-assisted formation of neutrophil extracellular traps (NETs). NETs are web-like structures of DNA and proteins that play an important role in killing of pathogens. In addition, NETs are implicated in thrombus formation. In vivo, this protein exhibits antithrombotic activity in two distinct mice models that are highly dependent on platelets. It is noteworthy that it inhibits thrombosis without promoting excessive bleeding. The chain is Dipetalodipin from Dipetalogaster maximus (Blood-sucking bug).